The primary structure comprises 160 residues: UPF0479 membrane protein YLL066W-A (160 aa).

Helical transmembrane passes span 39–59 (IVFC…KVLQ) and 136–156 (VPMI…ISQH).

It belongs to the UPF0479 family.

It is found in the membrane. The sequence is that of UPF0479 membrane protein YLL066W-A from Saccharomyces cerevisiae (strain ATCC 204508 / S288c) (Baker's yeast).